The primary structure comprises 705 residues: Ribonuclease R (705 aa).

One can recognise an RNB domain in the interval 240–567 (RRDLREQLCF…VHRLLKKALR (328 aa)). The region spanning 615-696 (GEEFIGIITG…ERARVEFELI (82 aa)) is the S1 motif domain.

This sequence belongs to the RNR ribonuclease family. RNase R subfamily.

The protein localises to the cytoplasm. The catalysed reaction is Exonucleolytic cleavage in the 3'- to 5'-direction to yield nucleoside 5'-phosphates.. In terms of biological role, 3'-5' exoribonuclease that releases 5'-nucleoside monophosphates and is involved in maturation of structured RNAs. This is Ribonuclease R from Aquifex aeolicus (strain VF5).